We begin with the raw amino-acid sequence, 387 residues long: MNIHEYQAKELCREFGINVSNGALALSADEAVEVAKKLGGNVWAVKAQIHAGGRGLGGGVKIAKNLDEVKKYANQILGMTLVTKQTGPKGKLVRKIYIEQGCNIKKEFYVSLTFNRAKEQIGLIASASGGMGIEEVDKNLIKTLNIDPQIGLKAFHAYEVGDFLGFDKDLNNKFYKFLNGLYKLYIATDANLVEINPMVLTAEDEFFALDAKMGFDDAALFRHENIAAMRDLDEEESSEVEAKQYGLSYVKLDGDIGCMVNGAGLAMGTMDTITYCGGKSANFLDVGGGASAETVAKAFEIILRDKNVKSIFVNIFGGIVRCDRIAKGILEATKLTKVEIPVVVRLDGTNAKEAIELLKEANIENIYSAHDLEEGAKLAVKLVNGEK.

ATP-binding positions include Lys-46, 53–55 (GRG), Glu-99, Cys-102, and Glu-107. Asn-196 and Asp-210 together coordinate Mg(2+). Substrate is bound by residues Asn-261 and 318–320 (GIV).

It belongs to the succinate/malate CoA ligase beta subunit family. As to quaternary structure, heterotetramer of two alpha and two beta subunits. The cofactor is Mg(2+).

It catalyses the reaction succinate + ATP + CoA = succinyl-CoA + ADP + phosphate. The catalysed reaction is GTP + succinate + CoA = succinyl-CoA + GDP + phosphate. The protein operates within carbohydrate metabolism; tricarboxylic acid cycle; succinate from succinyl-CoA (ligase route): step 1/1. In terms of biological role, succinyl-CoA synthetase functions in the citric acid cycle (TCA), coupling the hydrolysis of succinyl-CoA to the synthesis of either ATP or GTP and thus represents the only step of substrate-level phosphorylation in the TCA. The beta subunit provides nucleotide specificity of the enzyme and binds the substrate succinate, while the binding sites for coenzyme A and phosphate are found in the alpha subunit. This is Succinate--CoA ligase [ADP-forming] subunit beta from Campylobacter hominis (strain ATCC BAA-381 / DSM 21671 / CCUG 45161 / LMG 19568 / NCTC 13146 / CH001A).